The sequence spans 342 residues: S-adenosyl-L-methionine-dependent tRNA 4-demethylwyosine synthase (342 aa).

[2Fe-2S] cluster is bound by residues Cys45, Cys58, and Cys71. The Radical SAM core domain maps to 64 to 312 (YGIHSHRCLQ…VKHLPGYHIE (249 aa)). Cys81, Cys85, and Cys88 together coordinate [4Fe-4S] cluster.

It belongs to the TYW1 family. In terms of assembly, monomer. The cofactor is [2Fe-2S] cluster. Requires [4Fe-4S] cluster as cofactor.

It localises to the cytoplasm. The enzyme catalyses N(1)-methylguanosine(37) in tRNA(Phe) + pyruvate + S-adenosyl-L-methionine = 4-demethylwyosine(37) in tRNA(Phe) + 5'-deoxyadenosine + L-methionine + CO2 + H2O. In terms of biological role, component of the wyosine derivatives biosynthesis pathway that catalyzes the condensation of N-methylguanine with 2 carbon atoms from pyruvate to form the tricyclic 4-demethylwyosine (imG-14) on guanosine-37 of tRNA(Phe). In Pyrococcus horikoshii (strain ATCC 700860 / DSM 12428 / JCM 9974 / NBRC 100139 / OT-3), this protein is S-adenosyl-L-methionine-dependent tRNA 4-demethylwyosine synthase.